The chain runs to 79 residues: Large ribosomal subunit protein bL28 (79 aa).

This sequence belongs to the bacterial ribosomal protein bL28 family.

The polypeptide is Large ribosomal subunit protein bL28 (Blochmanniella floridana).